Here is an 89-residue protein sequence, read N- to C-terminus: Small ribosomal subunit protein uS17 (89 aa).

This sequence belongs to the universal ribosomal protein uS17 family. Part of the 30S ribosomal subunit.

One of the primary rRNA binding proteins, it binds specifically to the 5'-end of 16S ribosomal RNA. The sequence is that of Small ribosomal subunit protein uS17 from Chlorobium chlorochromatii (strain CaD3).